Reading from the N-terminus, the 186-residue chain is MKLIPDDNWRWYFDADQARLMLDLANGMTFRSRFSATMLTPDAFNPSDFCVEDAALFFTYQEKCLTLNIDAQAKAELVLNALVANRFLKPLMPKSWHFAALGHGEYCPQLGELVWVRLNERLEDACFMVVDTGDKASLCLLAQAELALSGKVMVLGEAIKIMHDRLCPVDEGADHAQSSLHFAHAG.

It belongs to the ZapC family. Interacts directly with FtsZ.

The protein resides in the cytoplasm. Functionally, contributes to the efficiency of the cell division process by stabilizing the polymeric form of the cell division protein FtsZ. Acts by promoting interactions between FtsZ protofilaments and suppressing the GTPase activity of FtsZ. In Musicola paradisiaca (strain Ech703) (Dickeya paradisiaca), this protein is Cell division protein ZapC.